A 116-amino-acid chain; its full sequence is Large ribosomal subunit protein uL18 (116 aa).

Belongs to the universal ribosomal protein uL18 family. Part of the 50S ribosomal subunit; part of the 5S rRNA/L5/L18/L25 subcomplex. Contacts the 5S and 23S rRNAs.

Functionally, this is one of the proteins that bind and probably mediate the attachment of the 5S RNA into the large ribosomal subunit, where it forms part of the central protuberance. The polypeptide is Large ribosomal subunit protein uL18 (Shewanella baltica (strain OS223)).